The chain runs to 128 residues: Large ribosomal subunit protein mL52 (128 aa).

A mitochondrion-targeting transit peptide spans M1–A28.

This sequence belongs to the mitochondrion-specific ribosomal protein mL52 family. In terms of assembly, component of the mitochondrial ribosome large subunit (39S) which comprises a 16S rRNA and about 50 distinct proteins.

It localises to the mitochondrion. In Drosophila pseudoobscura pseudoobscura (Fruit fly), this protein is Large ribosomal subunit protein mL52 (mRpL52).